Reading from the N-terminus, the 284-residue chain is 4-diphosphocytidyl-2-C-methyl-D-erythritol kinase (284 aa).

The active site involves K14. 98–108 (PMGGGLGGGSS) lines the ATP pocket. Residue D140 is part of the active site.

The protein belongs to the GHMP kinase family. IspE subfamily.

The catalysed reaction is 4-CDP-2-C-methyl-D-erythritol + ATP = 4-CDP-2-C-methyl-D-erythritol 2-phosphate + ADP + H(+). Its pathway is isoprenoid biosynthesis; isopentenyl diphosphate biosynthesis via DXP pathway; isopentenyl diphosphate from 1-deoxy-D-xylulose 5-phosphate: step 3/6. Functionally, catalyzes the phosphorylation of the position 2 hydroxy group of 4-diphosphocytidyl-2C-methyl-D-erythritol. The protein is 4-diphosphocytidyl-2-C-methyl-D-erythritol kinase of Shewanella putrefaciens (strain CN-32 / ATCC BAA-453).